The following is a 157-amino-acid chain: Transcription elongation factor GreA (157 aa).

The protein belongs to the GreA/GreB family.

Functionally, necessary for efficient RNA polymerase transcription elongation past template-encoded arresting sites. The arresting sites in DNA have the property of trapping a certain fraction of elongating RNA polymerases that pass through, resulting in locked ternary complexes. Cleavage of the nascent transcript by cleavage factors such as GreA or GreB allows the resumption of elongation from the new 3'terminus. GreA releases sequences of 2 to 3 nucleotides. The chain is Transcription elongation factor GreA from Caulobacter sp. (strain K31).